Here is a 165-residue protein sequence, read N- to C-terminus: Large ribosomal subunit protein uL10 (165 aa).

Belongs to the universal ribosomal protein uL10 family. Part of the ribosomal stalk of the 50S ribosomal subunit. The N-terminus interacts with L11 and the large rRNA to form the base of the stalk. The C-terminus forms an elongated spine to which L12 dimers bind in a sequential fashion forming a multimeric L10(L12)X complex.

In terms of biological role, forms part of the ribosomal stalk, playing a central role in the interaction of the ribosome with GTP-bound translation factors. This is Large ribosomal subunit protein uL10 from Burkholderia mallei (strain NCTC 10229).